A 205-amino-acid chain; its full sequence is Molybdenum cofactor guanylyltransferase (205 aa).

Residues 14 to 16 (LAG), K27, D77, and D107 each bind GTP. Mg(2+) is bound at residue D107.

The protein belongs to the MobA family. In terms of assembly, monomer. Requires Mg(2+) as cofactor.

It localises to the cytoplasm. The enzyme catalyses Mo-molybdopterin + GTP + H(+) = Mo-molybdopterin guanine dinucleotide + diphosphate. Transfers a GMP moiety from GTP to Mo-molybdopterin (Mo-MPT) cofactor (Moco or molybdenum cofactor) to form Mo-molybdopterin guanine dinucleotide (Mo-MGD) cofactor. This is Molybdenum cofactor guanylyltransferase from Burkholderia cenocepacia (strain HI2424).